We begin with the raw amino-acid sequence, 248 residues long: 2,3-bisphosphoglycerate-dependent phosphoglycerate mutase 2 (248 aa).

Substrate contacts are provided by residues 8–15 (RHGESAWN), 21–22 (TG), Arg60, 87–90 (EKHY), Lys98, 114–115 (RR), and 183–184 (GN). The active-site Tele-phosphohistidine intermediate is His9. Glu87 serves as the catalytic Proton donor/acceptor.

This sequence belongs to the phosphoglycerate mutase family. BPG-dependent PGAM subfamily.

It catalyses the reaction (2R)-2-phosphoglycerate = (2R)-3-phosphoglycerate. It participates in carbohydrate degradation; glycolysis; pyruvate from D-glyceraldehyde 3-phosphate: step 3/5. Functionally, catalyzes the interconversion of 2-phosphoglycerate and 3-phosphoglycerate. The sequence is that of 2,3-bisphosphoglycerate-dependent phosphoglycerate mutase 2 from Bacteroides thetaiotaomicron (strain ATCC 29148 / DSM 2079 / JCM 5827 / CCUG 10774 / NCTC 10582 / VPI-5482 / E50).